Here is a 736-residue protein sequence, read N- to C-terminus: Catalase-peroxidase 2 (736 aa).

An N-terminal signal peptide occupies residues 1–23 (MIKKTLPVLILLALSGSFSTAVA). Positions 102–223 (WHGAGTYRTY…LAATQMGLIY (122 aa)) form a cross-link, tryptophyl-tyrosyl-methioninium (Trp-Tyr) (with M-249). His103 functions as the Proton acceptor in the catalytic mechanism. Positions 223–249 (YVNPEGPGGKPDPLASAKDIREAFSRM) form a cross-link, tryptophyl-tyrosyl-methioninium (Tyr-Met) (with W-102). His264 serves as a coordination point for heme b.

Belongs to the peroxidase family. Peroxidase/catalase subfamily. In terms of assembly, homodimer or homotetramer. Heme b is required as a cofactor. In terms of processing, formation of the three residue Trp-Tyr-Met cross-link is important for the catalase, but not the peroxidase activity of the enzyme.

The protein resides in the periplasm. It carries out the reaction H2O2 + AH2 = A + 2 H2O. It catalyses the reaction 2 H2O2 = O2 + 2 H2O. Its function is as follows. Bifunctional enzyme with both catalase and broad-spectrum peroxidase activity. In Escherichia coli O157:H7, this protein is Catalase-peroxidase 2.